Reading from the N-terminus, the 160-residue chain is Protein shisa-like-2B (160 aa).

Residues 65–85 traverse the membrane as a helical segment; it reads IGALIGLGIAALVLLAFVISV.

This sequence belongs to the shisa family.

The protein resides in the membrane. This is Protein shisa-like-2B from Homo sapiens (Human).